A 128-amino-acid polypeptide reads, in one-letter code: UPF0325 protein YaeH (128 aa).

Belongs to the UPF0325 family.

This Escherichia fergusonii (strain ATCC 35469 / DSM 13698 / CCUG 18766 / IAM 14443 / JCM 21226 / LMG 7866 / NBRC 102419 / NCTC 12128 / CDC 0568-73) protein is UPF0325 protein YaeH.